We begin with the raw amino-acid sequence, 232 residues long: 5'-methylthioadenosine/S-adenosylhomocysteine nucleosidase (232 aa).

The Proton acceptor role is filled by glutamate 12. Substrate-binding positions include glycine 78, isoleucine 152, and 173–174 (ME). Catalysis depends on aspartate 197, which acts as the Proton donor.

Belongs to the PNP/UDP phosphorylase family. MtnN subfamily. As to quaternary structure, homodimer.

The catalysed reaction is S-adenosyl-L-homocysteine + H2O = S-(5-deoxy-D-ribos-5-yl)-L-homocysteine + adenine. The enzyme catalyses S-methyl-5'-thioadenosine + H2O = 5-(methylsulfanyl)-D-ribose + adenine. It carries out the reaction 5'-deoxyadenosine + H2O = 5-deoxy-D-ribose + adenine. The protein operates within amino-acid biosynthesis; L-methionine biosynthesis via salvage pathway; S-methyl-5-thio-alpha-D-ribose 1-phosphate from S-methyl-5'-thioadenosine (hydrolase route): step 1/2. Catalyzes the irreversible cleavage of the glycosidic bond in both 5'-methylthioadenosine (MTA) and S-adenosylhomocysteine (SAH/AdoHcy) to adenine and the corresponding thioribose, 5'-methylthioribose and S-ribosylhomocysteine, respectively. Also cleaves 5'-deoxyadenosine, a toxic by-product of radical S-adenosylmethionine (SAM) enzymes, into 5-deoxyribose and adenine. Thus, is required for in vivo function of the radical SAM enzymes biotin synthase and lipoic acid synthase, that are inhibited by 5'-deoxyadenosine accumulation. The protein is 5'-methylthioadenosine/S-adenosylhomocysteine nucleosidase of Escherichia coli O7:K1 (strain IAI39 / ExPEC).